A 453-amino-acid polypeptide reads, in one-letter code: MVASSFAVLRASRLCQQDWKSWARLFVPPPLSTGGRTTWARTNATLSVEPEGRSCWDEPLSIAVRGLAPEQPVTLRSALRDEKGALFRAHARYRADAGGELNLARAPALGGSFSGLEPMGLLWAMEPERPLWRLIKRDVQTPFLVELEVLDGHEPDGGQRLAQAVHERHFLAPGVRRVPVREGRVRATLFLPPEPGPFPGIIDLFGVGGGLLEYRASLLAGKGFAVMALAYYNYDDLPKSIETMHMEYFEEAVNYLRSHPEVKGPGIGLLGISKGGELGLAMASFLKGITAAVVINGSVAAVGNTISYKDETIPPVSLLRNQVKMTKDGLLDVVEALQSPLVDKKSFIPVERSDTTFLFLVGQDDHNWKSEFYADEISKRLQAHGKEKPQIICYPAAGHYIEPPYFPLCSAGMHLLVGANITFGGEPRAHAVAQVDAWQQLQTFFHKQLGSKS.

Residues 1-42 (MVASSFAVLRASRLCQQDWKSWARLFVPPPLSTGGRTTWART) constitute a mitochondrion transit peptide. N6-acetyllysine is present on Lys83. Active-site charge relay system residues include Ser273, Asp365, and His399. Lys447 bears the N6-succinyllysine mark.

It belongs to the C/M/P thioester hydrolase family. Monomer. Highly expressed in brown and white adipose tissue, muscle, heart, kidney, lung, adrenal gland and spleen; weakly expressed in intestine, testis and brain.

The protein resides in the mitochondrion matrix. It carries out the reaction hexadecanoyl-CoA + H2O = hexadecanoate + CoA + H(+). The catalysed reaction is tetradecanoyl-CoA + H2O = tetradecanoate + CoA + H(+). It catalyses the reaction octadecanoyl-CoA + H2O = octadecanoate + CoA + H(+). The enzyme catalyses eicosanoyl-CoA + H2O = eicosanoate + CoA + H(+). It carries out the reaction decanoyl-CoA + H2O = decanoate + CoA + H(+). The catalysed reaction is dodecanoyl-CoA + H2O = dodecanoate + CoA + H(+). It catalyses the reaction (9Z)-octadecenoyl-CoA + H2O = (9Z)-octadecenoate + CoA + H(+). The enzyme catalyses (9Z)-hexadecenoyl-CoA + H2O = (9Z)-hexadecenoate + CoA + H(+). It carries out the reaction (9E)-octadecenoyl-CoA + H2O = (9E)-octadecenoate + CoA + H(+). The catalysed reaction is (9Z,12Z)-octadecadienoyl-CoA + H2O = (9Z,12Z)-octadecadienoate + CoA + H(+). Its pathway is lipid metabolism; fatty acid metabolism. Catalyzes the hydrolysis of acyl-CoAs into free fatty acids and coenzyme A (CoASH), regulating their respective intracellular levels. Displays higher activity toward long chain acyl CoAs (C14-C20). The enzyme is involved in enhancing the hepatic fatty acid oxidation in mitochondria. The chain is Acyl-coenzyme A thioesterase 2, mitochondrial (Acot2) from Mus musculus (Mouse).